We begin with the raw amino-acid sequence, 210 residues long: Probable septum site-determining protein MinC (210 aa).

This sequence belongs to the MinC family. As to quaternary structure, interacts with MinD and FtsZ.

Functionally, cell division inhibitor that blocks the formation of polar Z ring septums. Rapidly oscillates between the poles of the cell to destabilize FtsZ filaments that have formed before they mature into polar Z rings. Prevents FtsZ polymerization. The protein is Probable septum site-determining protein MinC of Clostridium novyi (strain NT).